Here is a 904-residue protein sequence, read N- to C-terminus: Alanine--tRNA ligase (904 aa).

Zn(2+) is bound by residues His584, His588, Cys687, and His691.

It belongs to the class-II aminoacyl-tRNA synthetase family. The cofactor is Zn(2+).

The protein resides in the cytoplasm. The enzyme catalyses tRNA(Ala) + L-alanine + ATP = L-alanyl-tRNA(Ala) + AMP + diphosphate. In terms of biological role, catalyzes the attachment of alanine to tRNA(Ala) in a two-step reaction: alanine is first activated by ATP to form Ala-AMP and then transferred to the acceptor end of tRNA(Ala). Also edits incorrectly charged Ser-tRNA(Ala) and Gly-tRNA(Ala) via its editing domain. This Mycobacterium tuberculosis (strain ATCC 25177 / H37Ra) protein is Alanine--tRNA ligase.